Reading from the N-terminus, the 146-residue chain is Hemoglobin subunit beta (146 aa).

Residue valine 1 is modified to N-acetylvaline. A Globin domain is found at 2 to 146 (HLTGEEKSAV…VANALAHKYH (145 aa)). Threonine 12 is subject to Phosphothreonine. Serine 44 bears the Phosphoserine mark. Lysine 59 bears the N6-acetyllysine mark. Heme b is bound at residue histidine 63. At lysine 82 the chain carries N6-acetyllysine. Histidine 92 is a binding site for heme b. At cysteine 93 the chain carries S-nitrosocysteine. Lysine 144 carries the post-translational modification N6-acetyllysine.

The protein belongs to the globin family. Heterotetramer of two alpha chains and two beta chains. In terms of tissue distribution, red blood cells.

Its function is as follows. Involved in oxygen transport from the lung to the various peripheral tissues. This Leontocebus fuscicollis (Brown-mantled tamarin) protein is Hemoglobin subunit beta (HBB).